We begin with the raw amino-acid sequence, 1134 residues long: Isoleucine--tRNA ligase (1134 aa).

A 'HIGH' region motif is present at residues P52–H62. A 'KMSKS' region motif is present at residues K656–R660. An ATP-binding site is contributed by K659.

Belongs to the class-I aminoacyl-tRNA synthetase family. IleS type 2 subfamily. As to quaternary structure, monomer. Requires Zn(2+) as cofactor.

The protein localises to the cytoplasm. It catalyses the reaction tRNA(Ile) + L-isoleucine + ATP = L-isoleucyl-tRNA(Ile) + AMP + diphosphate. Catalyzes the attachment of isoleucine to tRNA(Ile). As IleRS can inadvertently accommodate and process structurally similar amino acids such as valine, to avoid such errors it has two additional distinct tRNA(Ile)-dependent editing activities. One activity is designated as 'pretransfer' editing and involves the hydrolysis of activated Val-AMP. The other activity is designated 'posttransfer' editing and involves deacylation of mischarged Val-tRNA(Ile). In Wolbachia sp. subsp. Brugia malayi (strain TRS), this protein is Isoleucine--tRNA ligase.